A 348-amino-acid polypeptide reads, in one-letter code: EGF-like domain-containing protein 1 (348 aa).

The first 19 residues, 1 to 19 (MFYLSTFMTIVISLSLVSC), serve as a signal peptide directing secretion. In terms of domain architecture, EGF-like spans 60-92 (TGSNCTVTCQNNGKCYDGSKCLCSSDYTGDLCE). 3 cysteine pairs are disulfide-bonded: C64–C74, C68–C80, and C82–C91. One can recognise a ZP domain in the interval 99–342 (RCTLDAVVFE…PTCAAPXVGQ (244 aa)).

Prismatic layer of shell (at protein level). Expressed primarily in the mantle with highest level in the mantle edge and lower level in the mantle pallium.

It is found in the secreted. The chain is EGF-like domain-containing protein 1 from Pinctada maxima (Silver-lipped pearl oyster).